A 301-amino-acid chain; its full sequence is uncharacterized protein (301 aa).

3 residues coordinate a divalent metal cation: Glu146, Glu148, and Asp177.

This sequence belongs to the FAH family.

This is an uncharacterized protein from Staphylococcus epidermidis (strain ATCC 12228 / FDA PCI 1200).